The chain runs to 201 residues: UPF0637 protein LCA_0842 (201 aa).

Belongs to the UPF0637 family.

In Latilactobacillus sakei subsp. sakei (strain 23K) (Lactobacillus sakei subsp. sakei), this protein is UPF0637 protein LCA_0842.